Consider the following 119-residue polypeptide: Lamprin 1.8-10 (119 aa).

A signal peptide spans 1 to 19; it reads MAATMQALLVIALLHLATA. 7 tandem repeats follow at residues 41–45, 46–50, 51–55, 56–60, 61–65, 66–70, and 86–90. Positions 41 to 90 are 7 X 5 AA approximate repeats; sequence GGLGYGGLGYGGLGYGGLGVAGLGYGGLGYPGAALGGAYTHHAALGGLGY.

The polymeric lamprin chains self-aggregate to form fibers and have secondary structures particularly rich in beta-sheets and in beta-turns.

It localises to the secreted. It is found in the extracellular space. The protein localises to the extracellular matrix. Its function is as follows. Self-aggregating protein that is part of the soluble form of lamprin. The polypeptide is Lamprin 1.8-10 (Petromyzon marinus (Sea lamprey)).